A 357-amino-acid chain; its full sequence is Embryonic growth/differentiation factor 1 (357 aa).

The N-terminal stretch at 1 to 23 is a signal peptide; that stretch reads MLPVCHRFCDHLLLLLLLPSTTL. Positions 24-237 are excised as a propeptide; sequence APAPASMGPA…RLCPLPRLRR (214 aa). A glycan (N-linked (GlcNAc...) asparagine) is linked at asparagine 191. Intrachain disulfides connect cysteine 251-cysteine 322, cysteine 280-cysteine 354, and cysteine 284-cysteine 356.

Belongs to the TGF-beta family. As to quaternary structure, homodimer; disulfide-linked. Expressed almost exclusively in the nervous system.

It localises to the secreted. May mediate cell differentiation events during embryonic development. This chain is Embryonic growth/differentiation factor 1 (Gdf1), found in Mus musculus (Mouse).